Reading from the N-terminus, the 525-residue chain is Protein BSP1 (525 aa).

Disordered stretches follow at residues 21-40, 98-262, 285-325, and 339-525; these read INKP…TPIE, QQQH…PSKM, LSSE…VPPK, and DKTG…PTKI. Residues 110 to 122 are compositionally biased toward basic and acidic residues; it reads IEPVRHIIPDRHS. Over residues 148-162 the composition is skewed to polar residues; sequence NRASSENVVKSTTSA. Basic and acidic residues-rich tracts occupy residues 171–182, 201–223, and 230–242; these read YKDDITAKKLDV, DKNK…EDNK, and KDQD…KPTR. Polar residues predominate over residues 251–261; it reads QLKSPPQSPSK. A compositionally biased stretch (low complexity) spans 285-297; it reads LSSEENSRSSLSE. Basic and acidic residues-rich tracts occupy residues 314–325 and 339–354; these read KAEKKKPVVPPK and DKTG…EPEF. Residues 382-398 show a composition bias toward polar residues; it reads QNLSKNTENKKSVAQSK. The segment covering 447–456 has biased composition (acidic residues); it reads EESEISDSEP. The segment covering 510–525 has biased composition (basic residues); the sequence is NKSRSRGPKRKLPTKI.

Its subcellular location is the cell membrane. The protein resides in the cytoplasm. It localises to the cytoskeleton. The protein localises to the actin patch. Its function is as follows. Cortical patch protein involved in endocytosis. This Candida glabrata (strain ATCC 2001 / BCRC 20586 / JCM 3761 / NBRC 0622 / NRRL Y-65 / CBS 138) (Yeast) protein is Protein BSP1 (BSP1).